A 551-amino-acid polypeptide reads, in one-letter code: HTH-type transcriptional regulator SgrR (551 aa).

The 116-residue stretch at 1 to 116 (MPSARLQQQF…LVSHLGRSFR (116 aa)) folds into the HTH marR-type domain. Positions 26–49 (LNELAALLSCSRRHMRTLLNTMQD) form a DNA-binding region, H-T-H motif. Residues 163 to 492 (ELEADIAHHW…IDWQADAARW (330 aa)) are solute-binding.

In terms of biological role, activates the small RNA gene sgrS under glucose-phosphate stress conditions as well as yfdZ. Represses its own transcription under both stress and non-stress conditions. Might act as a sensor of the intracellular accumulation of phosphoglucose by binding these molecules in its C-terminal solute-binding domain. The polypeptide is HTH-type transcriptional regulator SgrR (Shigella flexneri serotype 5b (strain 8401)).